The primary structure comprises 298 residues: Lipoyl synthase (298 aa).

Residues Cys40, Cys45, Cys51, Cys67, Cys71, Cys74, and Ser280 each contribute to the [4Fe-4S] cluster site. The Radical SAM core domain maps to 53–269 (AVRRTATFMI…KEIAMAKGFS (217 aa)).

It belongs to the radical SAM superfamily. Lipoyl synthase family. [4Fe-4S] cluster is required as a cofactor.

Its subcellular location is the cytoplasm. The enzyme catalyses [[Fe-S] cluster scaffold protein carrying a second [4Fe-4S](2+) cluster] + N(6)-octanoyl-L-lysyl-[protein] + 2 oxidized [2Fe-2S]-[ferredoxin] + 2 S-adenosyl-L-methionine + 4 H(+) = [[Fe-S] cluster scaffold protein] + N(6)-[(R)-dihydrolipoyl]-L-lysyl-[protein] + 4 Fe(3+) + 2 hydrogen sulfide + 2 5'-deoxyadenosine + 2 L-methionine + 2 reduced [2Fe-2S]-[ferredoxin]. It functions in the pathway protein modification; protein lipoylation via endogenous pathway; protein N(6)-(lipoyl)lysine from octanoyl-[acyl-carrier-protein]. In terms of biological role, catalyzes the radical-mediated insertion of two sulfur atoms into the C-6 and C-8 positions of the octanoyl moiety bound to the lipoyl domains of lipoate-dependent enzymes, thereby converting the octanoylated domains into lipoylated derivatives. This chain is Lipoyl synthase, found in Bacillus pumilus (strain SAFR-032).